The sequence spans 138 residues: Phospholipase A2 crotoxin basic chain CBa2 (138 aa).

Positions 1–16 (MRALWIVAVLLVGVEG) are cleaved as a signal peptide. 7 disulfides stabilise this stretch: cysteine 42–cysteine 131, cysteine 44–cysteine 60, cysteine 59–cysteine 111, cysteine 65–cysteine 138, cysteine 66–cysteine 104, cysteine 73–cysteine 97, and cysteine 91–cysteine 102. Positions 43, 45, and 47 each coordinate Ca(2+). The active site involves histidine 63. Ca(2+) is bound at residue aspartate 64. The active site involves aspartate 105.

It belongs to the phospholipase A2 family. Group II subfamily. D49 sub-subfamily. In terms of assembly, heterodimer of one of the acidic (CA1, CA2, CA3 or CA4) and one of the basic (CBa1, CBa2, CBb, CBc or CBd) subunits; non-covalently linked. The acidic subunit is non-toxic, without enzymatic activity and comprises 3 peptides that are cross-linked by 5 disulfide bridges. The basic subunit is toxic, has phospholipase A2 activity and is composed of a single chain. Multiple variants of each subunit give different crotoxin complexes that can be subdivided into 2 classes: (1) those of high toxicity, low PLA2 activity (CBb, CBc and CBd linked with high affinity to any CA) and high stability (K(d)=4.5 nM) and (2) those of moderate toxicity, high PLA2 activity (CBa2 linked with low affinity to any CA) and low stability (K(d)=25 nM). Interacts with human NBD1 domain of CFTR. Ca(2+) is required as a cofactor. In terms of tissue distribution, expressed by the venom gland.

It localises to the secreted. It carries out the reaction a 1,2-diacyl-sn-glycero-3-phosphocholine + H2O = a 1-acyl-sn-glycero-3-phosphocholine + a fatty acid + H(+). Its function is as follows. Heterodimer CA-CB: Crotoxin is a potent presynaptic neurotoxin that possesses phospholipase A2 (PLA2) activity and exerts a lethal action by blocking neuromuscular transmission. It consists of a non-covalent association of a basic and weakly toxic PLA2 subunit (CBa2, CBb, CBc, or CBd), with a small acidic, non-enzymatic and non-toxic subunit (CA1, CA2, CA3 or CA4). The complex acts by binding to a specific 48-kDa protein (R48) receptor located on presynaptic membranes, forming a transient ternary complex CA-CB-R48, followed by dissociation of the CA-CB complex and release of the CA subunit. At equilibrium, only the CB subunits remain associated with the specific crotoxin receptor. In addition to neurotoxicity, crotoxin has been found to exert myotoxicity, nephrotoxicity, and cardiovascular toxicity. Moreover, anti-inflammatory, immunomodulatory, anti-tumor and analgesic effects of crotoxin have also been reported. In terms of biological role, monomer CBa2: The basic subunit of crotoxin is a snake venom phospholipase A2 (PLA2) that exhibits weak neurotoxicity (10-fold less than the heterodimer) and strong anticoagulant effects by binding to factor Xa (F10) and inhibiting the prothrombinase activity (IC(50) is 41 nM). In addition, it shows the same effects described for the heterodimer and binds the nucleotide-binding domain (NBD1) of CFTR chloride channels and increases the channel current. PLA2 catalyzes the calcium-dependent hydrolysis of the 2-acyl groups in 3-sn-phosphoglycerides. The sequence is that of Phospholipase A2 crotoxin basic chain CBa2 from Crotalus durissus terrificus (South American rattlesnake).